Here is a 1733-residue protein sequence, read N- to C-terminus: MADVAESQENAPAERAELTVPEMRQWLRNWVGKAVGKAPDSIDESVPMVELGLSSRDAVAMAADIEDLTGVTLSVAVAFAHPTIESLATRIIEGEPETDLAGDDAEDWSRTGPAERVDIAIVGLSTRFPGEMNTPEQTWQALLEGRDGITDLPDGRWSEFLEEPRLAARVAGARTRGGYLKDIKGFDSEFFAVAKTEADNIDPQQRMALELTWEALEHARIPASSLRGQAVGVYIGSSTNDYSFLAVSDPTVAHPYAITGTSSSIIANRVSYFYDFHGPSVTIDTACSSSLVAIHQGVQALRNGEADVVVAGGVNALITPMVTLGFDEIGAVLAPDGRIKSFSADADGYTRSEGGGMLVLKRVDDARRDGDAILAVIAGSAVNHDGRSNGLIAPNQDAQADVLRRAYKDAGIDPRTVDYIEAHGTGTILGDPIEAEALGRVVGRGRPADRPALLGAVKTNVGHLESAAGAASMAKVVLALQHDKLPPSINFAGPSPYIDFDAMRLKMITTPTDWPRYGGYALAGVSSFGFGGANAHVVVREVLPRDVVEKEPEPEPEPKAAAEPAEAPTLAGHALRFDEFGNIITDSAVAEEPEPELPGVTEEALRLKEAALEELAAQEVTAPLVPLAVSAFLTSRKKAAAAELADWMQSPEGQASSLESIGRSLSRRNHGRSRAVVLAHDHDEAIKGLRAVAAGKQAPNVFSVDGPVTTGPVWVLAGFGAQHRKMGKSLYLRNEVFAAWIEKVDALVQDELGYSVLELILDDAQDYGIETTQVTIFAIQIALGELLRHHGAKPAAVIGQSLGEAASAYFAGGLSLRDATRAICSRSHLMGEGEAMLFGEYIRLMALVEYSADEIREVFSDFPDLEVCVYAAPTQTVIGGPPEQVDAILARAEAEGKFARKFATKGASHTSQMDPLLGELTAELQGIKPTSPTCGIFSTVHEGRYIKPGGEPIHDVEYWKKGLRHSVYFTHGIRNAVDSGHTTFLELAPNPVALMQVALTTADAGLHDAQLIPTLARKQDEVSSMVSTMAQLYVYGHDLDIRTLFSRASGPQDYANIPPTRFKRKEHWLPAHFSGDGSTYMPGTHVALPDGRHVWEYAPRDGNVDLAALVRAAAAHVLPDAQLTAAEQRAVPGDGARLVTTMTRHPGGASVQVHARIDESFTLVYDALVSRAGSESVLPTAVGAATAIAVADGAPVAPETPAEDADAETLSDSLTTRYMPSGMTRWSPDSGETIAERLGLIVGSAMGYEPEDLPWEVPLIELGLDSLMAVRIKNRVEYDFDLPPIQLTAVRDANLYNVEKLIEYAVEHRDEVQQLHEHQKTQTAEEIARAQAELLHGKVGKTEPVDSEAGVALPSPQNGEQPNPTGPALNVDVPPRDAAERVTFATWAIVTGKSPGGIFNELPRLDDEAAAKIAQRLSERAEGPITAEDVLTSSNIEALADKVRTYLEAGQIDGFVRTLRARPEAGGKVPVFVFHPAGGSTVVYEPLLGRLPADTPMYGFERVEGSIEERAQQYVPKLIEMQGDGPYVLVGWSLGGVLAYACAIGLRRLGKDVRFVGLIDAVRAGEEIPQTKEEIRKRWDRYAAFAEKTFNVTIPAIPYEQLEELDDEGQVRFVLDAVSQSGVQIPAGIIEHQRTSYLDNRAIDTAQIQPYDGHVTLYMADRYHDDAIMFEPRYAVRQPDGGWGEYVSDLEVVPIGGEHIQAIDEPIIAKVGEHMSRALGQIEADRTSEVGKQ.

The region spanning 17–95 (ELTVPEMRQW…SLATRIIEGE (79 aa)) is the Carrier 1 domain. Ser-55 is subject to O-(pantetheine 4'-phosphoryl)serine. The Ketosynthase family 3 (KS3) domain maps to 116-541 (RVDIAIVGLS…GANAHVVVRE (426 aa)). Cys-287 functions as the Acyl-thioester intermediate; for beta-ketoacyl synthase activity in the catalytic mechanism. Catalysis depends on for beta-ketoacyl synthase activity residues His-423 and His-463. The span at 548-560 (VEKEPEPEPEPKA) shows a compositional bias: basic and acidic residues. Residues 548–567 (VEKEPEPEPEPKAAAEPAEA) are disordered. Positions 713 to 1034 (VWVLAGFGAQ…MVSTMAQLYV (322 aa)) are acyltransferase. The Acyl-ester intermediate; for acyltransferase activity role is filled by Ser-801. In terms of domain architecture, Carrier 2 spans 1232–1309 (ETIAERLGLI…KLIEYAVEHR (78 aa)). Position 1266 is an O-(pantetheine 4'-phosphoryl)serine (Ser-1266). The interval 1344 to 1368 (PVDSEAGVALPSPQNGEQPNPTGPA) is disordered. Residues 1470–1563 (PVFVFHPAGG…RFVGLIDAVR (94 aa)) are thioesterase-like. Residue Ser-1533 is the For thioesterase-like activity of the active site.

In terms of processing, 4'-phosphopantetheine is transferred from CoA to specific serines of apo-Pks13 by PptT.

The protein operates within lipid metabolism; mycolic acid biosynthesis. Its activity is regulated as follows. The presence of FadD32 is necessary for the transfer of the acyl chain from the AMP carrier onto Pks13. Its function is as follows. Involved in the biosynthesis of mycolic acids. Forms, with FadD32, the initiation module of the mycolic condensation system. Synthesizes, in coupled reaction with FadD32, the biosynthetic precursors of mycolic acids, alpha-alkyl beta-ketoacids, via the condensation of two long chain fatty acid derivatives, a very long meromycoloyl-AMP and a shorter 2-carboxyacyl-CoA. The acyl chain of the acyl-AMP produced by FadD32 is specifically transferred onto the N-terminal ACP domain of Pks13, and then transferred onto the KS domain. The extender unit carboxyacyl-CoA is specifically loaded onto the AT domain, which catalyzes the covalent attachment of the carboxyacyl chain to its active site, and its subsequent transfer onto the P-pant arm of the C-terminal ACP domain. The KS domain catalyzes the condensation between the two loaded fatty acyl chains to produce an alpha-alkyl beta-ketothioester linked to the C-ACP domain. Then, the thioesterase-like domain acts as a transacylase and is responsible for both the release and the transfer of the alpha-alkyl beta-ketoacyl chain onto a polyol acceptor molecule, particularly trehalose, leading to the formation of the trehalose monomycolate precursor. The polypeptide is Polyketide synthase Pks13 (Mycobacterium tuberculosis (strain ATCC 25618 / H37Rv)).